A 441-amino-acid chain; its full sequence is Glutamyl-tRNA reductase (441 aa).

Residues 64–67, Ser123, 128–130, and Gln134 each bind substrate; these read TCNR and ETQ. The active-site Nucleophile is the Cys65. Residue 203–208 coordinates NADP(+); that stretch reads GAGEMI.

Belongs to the glutamyl-tRNA reductase family. In terms of assembly, homodimer.

The catalysed reaction is (S)-4-amino-5-oxopentanoate + tRNA(Glu) + NADP(+) = L-glutamyl-tRNA(Glu) + NADPH + H(+). Its pathway is porphyrin-containing compound metabolism; protoporphyrin-IX biosynthesis; 5-aminolevulinate from L-glutamyl-tRNA(Glu): step 1/2. In terms of biological role, catalyzes the NADPH-dependent reduction of glutamyl-tRNA(Glu) to glutamate 1-semialdehyde (GSA). This is Glutamyl-tRNA reductase from Burkholderia pseudomallei (strain K96243).